Consider the following 314-residue polypeptide: DNA-directed RNA polymerase subunit alpha (314 aa).

The tract at residues 1 to 227 (MIEFQKPTIS…EHLALFIDLS (227 aa)) is alpha N-terminal domain (alpha-NTD). The segment at 241 to 314 (VETVMENKEP…GQSFKQETEN (74 aa)) is alpha C-terminal domain (alpha-CTD).

Belongs to the RNA polymerase alpha chain family. As to quaternary structure, homodimer. The RNAP catalytic core consists of 2 alpha, 1 beta, 1 beta' and 1 omega subunit. When a sigma factor is associated with the core the holoenzyme is formed, which can initiate transcription.

It carries out the reaction RNA(n) + a ribonucleoside 5'-triphosphate = RNA(n+1) + diphosphate. Functionally, DNA-dependent RNA polymerase catalyzes the transcription of DNA into RNA using the four ribonucleoside triphosphates as substrates. This chain is DNA-directed RNA polymerase subunit alpha, found in Oenococcus oeni (strain ATCC BAA-331 / PSU-1).